The primary structure comprises 302 residues: tRNA pseudouridine synthase B (302 aa).

Asp48 (nucleophile) is an active-site residue.

It belongs to the pseudouridine synthase TruB family. Type 1 subfamily.

It carries out the reaction uridine(55) in tRNA = pseudouridine(55) in tRNA. Functionally, responsible for synthesis of pseudouridine from uracil-55 in the psi GC loop of transfer RNAs. In Xylella fastidiosa (strain Temecula1 / ATCC 700964), this protein is tRNA pseudouridine synthase B.